Consider the following 144-residue polypeptide: Phosphomevalonate dehydratase small subunit (144 aa).

Ser65 functions as the Proton acceptor in the catalytic mechanism.

This sequence belongs to the AcnX type II small subunit family. As to quaternary structure, heterodimer composed of a large subunit (PMDh-L) and a small subunit (PMDh-S).

The enzyme catalyses (R)-5-phosphomevalonate = (2E)-3-methyl-5-phosphooxypent-2-enoate + H2O. It functions in the pathway isoprenoid biosynthesis; isopentenyl diphosphate biosynthesis via mevalonate pathway. Its function is as follows. Component of a hydro-lyase that catalyzes the dehydration of mevalonate 5-phosphate (MVA5P) to form trans-anhydromevalonate 5-phosphate (tAHMP). Involved in the archaeal mevalonate (MVA) pathway, which provides fundamental precursors for isoprenoid biosynthesis, such as isopentenyl diphosphate (IPP) and dimethylallyl diphosphate (DMAPP). This Methanosarcina mazei (strain ATCC BAA-159 / DSM 3647 / Goe1 / Go1 / JCM 11833 / OCM 88) (Methanosarcina frisia) protein is Phosphomevalonate dehydratase small subunit.